Consider the following 151-residue polypeptide: Ribosome maturation factor RimP (151 aa).

Belongs to the RimP family.

It localises to the cytoplasm. In terms of biological role, required for maturation of 30S ribosomal subunits. In Halorhodospira halophila (strain DSM 244 / SL1) (Ectothiorhodospira halophila (strain DSM 244 / SL1)), this protein is Ribosome maturation factor RimP.